The primary structure comprises 72 residues: Translation initiation factor IF-1 (72 aa).

The S1-like domain occupies methionine 1–lysine 72.

This sequence belongs to the IF-1 family. Component of the 30S ribosomal translation pre-initiation complex which assembles on the 30S ribosome in the order IF-2 and IF-3, IF-1 and N-formylmethionyl-tRNA(fMet); mRNA recruitment can occur at any time during PIC assembly.

Its subcellular location is the cytoplasm. Functionally, one of the essential components for the initiation of protein synthesis. Stabilizes the binding of IF-2 and IF-3 on the 30S subunit to which N-formylmethionyl-tRNA(fMet) subsequently binds. Helps modulate mRNA selection, yielding the 30S pre-initiation complex (PIC). Upon addition of the 50S ribosomal subunit IF-1, IF-2 and IF-3 are released leaving the mature 70S translation initiation complex. This is Translation initiation factor IF-1 from Paracoccus denitrificans (strain Pd 1222).